A 531-amino-acid chain; its full sequence is Multidrug resistance protein fnx1 (531 aa).

The Cytoplasmic segment spans residues Met-1 to Lys-30. A helical membrane pass occupies residues Trp-31–Val-51. At Ala-52–Tyr-225 the chain is on the lumenal side. The chain crosses the membrane as a helical span at residues Leu-226–Gly-246. The Cytoplasmic segment spans residues Asp-247–Val-252. Residues Ser-253–Val-273 traverse the membrane as a helical segment. The Lumenal portion of the chain corresponds to Glu-274–Cys-297. Residues Leu-298–Phe-318 form a helical membrane-spanning segment. Residues Glu-319–Leu-360 lie on the Cytoplasmic side of the membrane. Residues Val-361–Phe-381 traverse the membrane as a helical segment. The Lumenal segment spans residues Gly-382 to Thr-385. Residues Pro-386–Thr-406 traverse the membrane as a helical segment. Residues Ser-407–Thr-496 lie on the Cytoplasmic side of the membrane. The chain crosses the membrane as a helical span at residues Ala-497 to Leu-517. Residues Arg-518–Ser-531 lie on the Lumenal side of the membrane.

It belongs to the major facilitator superfamily.

The protein localises to the vacuole membrane. In terms of biological role, efflux transporter. Confers resistance to a variety of toxic compounds. The sequence is that of Multidrug resistance protein fnx1 (fnx1) from Schizosaccharomyces pombe (strain 972 / ATCC 24843) (Fission yeast).